The primary structure comprises 346 residues: Probable choline kinase 1 (346 aa).

ATP-binding residues include Arg73, Gln210, and Asp227.

This sequence belongs to the choline/ethanolamine kinase family. Expressed in roots. Expressed at low levels in cauline leaves and flowers.

The enzyme catalyses choline + ATP = phosphocholine + ADP + H(+). Its pathway is phospholipid metabolism; phosphatidylcholine biosynthesis; phosphocholine from choline: step 1/1. Involved in phospholipid biosynthesis. Catalyzes the first step in phosphatidylcholine biosynthesis. The chain is Probable choline kinase 1 (CK1) from Arabidopsis thaliana (Mouse-ear cress).